Reading from the N-terminus, the 410-residue chain is Diguanylate cyclase DgcM (410 aa).

PAS domains lie at 3 to 70 (THNF…NQHD) and 129 to 198 (GFYA…HLPG). The 53-residue stretch at 199-251 (GHKPLNFVHKLADGSTRHVQTYAGPIEIYGDKLMLCIVHDITEQKRLEEQLEH) folds into the PAC domain. One can recognise a GGDEF domain in the interval 283–410 (QDYSLLLIDT…NDGRNRVLAA (128 aa)). Asp-291 is a Mg(2+) binding site. 3 residues coordinate substrate: Asn-299, His-304, and Asp-308. A Mg(2+)-binding site is contributed by Glu-334. The active-site Proton acceptor is the Glu-334.

As to quaternary structure, forms homodimers and homotetramers. Interacts with PdeR and MlrA. Mg(2+) serves as cofactor.

It carries out the reaction 2 GTP = 3',3'-c-di-GMP + 2 diphosphate. The protein operates within purine metabolism; 3',5'-cyclic di-GMP biosynthesis. With respect to regulation, activity is inhibited by the phosphodiesterase PdeR. Inhibition is relieved by high cellular c-di-GMP levels. Part of a signaling cascade that regulates curli biosynthesis. The cascade is composed of two cyclic-di-GMP (c-di-GMP) control modules, in which c-di-GMP controlled by the DgcE/PdeH pair (module I) regulates the activity of the DgcM/PdeR pair (module II), which in turn regulates activity of the transcription factor MlrA and expression of the master biofilm regulator csgD. DgcM stimulates activity of MlrA by direct interaction, leading to the transcription of csgD. It also catalyzes the synthesis of c-di-GMP via the condensation of 2 GTP molecules, which contributes to the c-di-GMP pool generated by module I in a positive feedback loop. Production of c-di-GMP contributes to but is not essential for MlrA activation. This Escherichia coli (strain K12) protein is Diguanylate cyclase DgcM.